The primary structure comprises 101 residues: MKPGEIIAASGEIELNAGQPTVTIEVSNTGDRPVQVGSHYHFFETNAGLSFDRDKVRGMRLDIPAGTAVRFEPGQTREVTLIPLAGKREVYGFRQKVMGPL.

Belongs to the urease beta subunit family. Heterotrimer of UreA (gamma), UreB (beta) and UreC (alpha) subunits. Three heterotrimers associate to form the active enzyme.

Its subcellular location is the cytoplasm. The enzyme catalyses urea + 2 H2O + H(+) = hydrogencarbonate + 2 NH4(+). It participates in nitrogen metabolism; urea degradation; CO(2) and NH(3) from urea (urease route): step 1/1. This is Urease subunit beta from Allorhizobium ampelinum (strain ATCC BAA-846 / DSM 112012 / S4) (Agrobacterium vitis (strain S4)).